The primary structure comprises 469 residues: ATP synthase subunit beta (469 aa).

155–162 contacts ATP; that stretch reads GGAGCGKT.

The protein belongs to the ATPase alpha/beta chains family. As to quaternary structure, F-type ATPases have 2 components, CF(1) - the catalytic core - and CF(0) - the membrane proton channel. CF(1) has five subunits: alpha(3), beta(3), gamma(1), delta(1), epsilon(1). CF(0) has three main subunits: a(1), b(2) and c(9-12). The alpha and beta chains form an alternating ring which encloses part of the gamma chain. CF(1) is attached to CF(0) by a central stalk formed by the gamma and epsilon chains, while a peripheral stalk is formed by the delta and b chains.

Its subcellular location is the cell inner membrane. The enzyme catalyses ATP + H2O + 4 H(+)(in) = ADP + phosphate + 5 H(+)(out). Functionally, produces ATP from ADP in the presence of a proton gradient across the membrane. The catalytic sites are hosted primarily by the beta subunits. In Syntrophus aciditrophicus (strain SB), this protein is ATP synthase subunit beta.